A 121-amino-acid polypeptide reads, in one-letter code: Small ribosomal subunit protein uS13 (121 aa).

Residues 98-121 (RGQKTRNNAHTVKGKPKSIAGKKK) form a disordered region. The span at 109–121 (VKGKPKSIAGKKK) shows a compositional bias: basic residues.

It belongs to the universal ribosomal protein uS13 family. In terms of assembly, part of the 30S ribosomal subunit. Forms a loose heterodimer with protein S19. Forms two bridges to the 50S subunit in the 70S ribosome.

Functionally, located at the top of the head of the 30S subunit, it contacts several helices of the 16S rRNA. In the 70S ribosome it contacts the 23S rRNA (bridge B1a) and protein L5 of the 50S subunit (bridge B1b), connecting the 2 subunits; these bridges are implicated in subunit movement. Contacts the tRNAs in the A and P-sites. This chain is Small ribosomal subunit protein uS13, found in Phytoplasma australiense.